Consider the following 1486-residue polypeptide: Chromosome partition protein MukB (1486 aa).

Residue 34-41 (GGNGAGKS) participates in ATP binding. 3 coiled-coil regions span residues 326-418 (LEAD…QYNQ), 444-480 (LETFQAKELEATEKMLSLEQKMSMAQTAHSQFEQAYQ), and 509-603 (RHLA…RAPV). The flexible hinge stretch occupies residues 666-783 (PGGSEDQRLN…EVPLFGRAAR (118 aa)). Coiled coils occupy residues 835-923 (EAEI…AKLE), 977-1115 (EMLS…TAKA), and 1209-1266 (VEAI…QNVS).

This sequence belongs to the SMC family. MukB subfamily. As to quaternary structure, homodimerization via its hinge domain. Binds to DNA via its C-terminal region. Interacts, and probably forms a ternary complex, with MukE and MukF via its C-terminal region. The complex formation is stimulated by calcium or magnesium. Interacts with tubulin-related protein FtsZ.

It localises to the cytoplasm. It is found in the nucleoid. Its function is as follows. Plays a central role in chromosome condensation, segregation and cell cycle progression. Functions as a homodimer, which is essential for chromosome partition. Involved in negative DNA supercoiling in vivo, and by this means organize and compact chromosomes. May achieve or facilitate chromosome segregation by condensation DNA from both sides of a centrally located replisome during cell division. The sequence is that of Chromosome partition protein MukB from Shigella boydii serotype 18 (strain CDC 3083-94 / BS512).